The primary structure comprises 244 residues: DNA polymerase sliding clamp (244 aa).

Belongs to the PCNA family. As to quaternary structure, homotrimer. The subunits circularize to form a toroid; DNA passes through its center. Replication factor C (RFC) is required to load the toroid on the DNA.

In terms of biological role, sliding clamp subunit that acts as a moving platform for DNA processing. Responsible for tethering the catalytic subunit of DNA polymerase to DNA during high-speed replication. In conjunction with replication factor C (RFC) stimulates DNA synthesis by PolB, relieving inhibition by replication protein A (RPA). This Methanothermobacter thermautotrophicus (strain ATCC 29096 / DSM 1053 / JCM 10044 / NBRC 100330 / Delta H) (Methanobacterium thermoautotrophicum) protein is DNA polymerase sliding clamp.